The chain runs to 315 residues: MQKKEIIILCGPTASGKSYLGHALAKACDGEIINIDSMQVYKEIPIITASPPESYKSEIPYHLYNFLPITEDFSVVKYLKLAAEKINQVTASGKLPILIGGTGLYINSLVFGYNNIPDISEDLRQQVRKLHNEIGNTELHNRLTKLDPLASSKINQSDTQRLIRAYEVVLQTGKSIFSFQTLPKEQILSEFNFKIIFLNPERKFLYKICDERLANIFKDGAIDEIALIKKQFNPDYLNLKAVGIKEILAYLENKLTLSEALNLAQTRTRRYAKRQITWFKHQIKEKITLDYSNEEDFLQVTRKLSILIDLPNSNK.

11–18 contributes to the ATP binding site; the sequence is GPTASGKS. 13–18 is a substrate binding site; it reads TASGKS. Interaction with substrate tRNA stretches follow at residues 36–39 and 160–164; these read DSMQ and QRLIR.

The protein belongs to the IPP transferase family. As to quaternary structure, monomer. Requires Mg(2+) as cofactor.

It catalyses the reaction adenosine(37) in tRNA + dimethylallyl diphosphate = N(6)-dimethylallyladenosine(37) in tRNA + diphosphate. Catalyzes the transfer of a dimethylallyl group onto the adenine at position 37 in tRNAs that read codons beginning with uridine, leading to the formation of N6-(dimethylallyl)adenosine (i(6)A). This is tRNA dimethylallyltransferase from Rickettsia bellii (strain OSU 85-389).